The sequence spans 229 residues: Large ribosomal subunit protein uL1 (229 aa).

The protein belongs to the universal ribosomal protein uL1 family. In terms of assembly, part of the 50S ribosomal subunit.

In terms of biological role, binds directly to 23S rRNA. The L1 stalk is quite mobile in the ribosome, and is involved in E site tRNA release. Functionally, protein L1 is also a translational repressor protein, it controls the translation of the L11 operon by binding to its mRNA. The protein is Large ribosomal subunit protein uL1 of Rhodopseudomonas palustris (strain HaA2).